The chain runs to 514 residues: Putative ankyrin repeat protein R863 (514 aa).

ANK repeat units follow at residues 45-74 (AKID…LKHP), 84-114 (KSLN…DINS), 115-144 (KKNR…DVRA), 146-174 (KDYA…NIKV), 176-204 (DNFA…NIRA), 205-234 (DNNY…DIRA), 236-264 (NNYA…NVKS), 266-294 (NDCA…DVRS), 295-324 (ENDY…NVRA), 325-354 (DNNY…NIRS), 356-384 (NDYA…NFKS), 385-414 (DYDC…DIRV), 415-444 (NNDY…DIRA), 446-474 (NDYA…NVKA), and 476-504 (NNYA…DVRS).

The protein is Putative ankyrin repeat protein R863 of Acanthamoeba polyphaga mimivirus (APMV).